A 357-amino-acid chain; its full sequence is Protein pelota homolog (357 aa).

It belongs to the eukaryotic release factor 1 family. Pelota subfamily. As to quaternary structure, monomer. A divalent metal cation serves as cofactor.

The protein resides in the cytoplasm. In terms of biological role, may function in recognizing stalled ribosomes, interact with stem-loop structures in stalled mRNA molecules, and effect endonucleolytic cleavage of the mRNA. May play a role in the release non-functional ribosomes and degradation of damaged mRNAs. Has endoribonuclease activity. In Thermococcus gammatolerans (strain DSM 15229 / JCM 11827 / EJ3), this protein is Protein pelota homolog.